Here is a 374-residue protein sequence, read N- to C-terminus: LIM domain-binding protein 1-A (374 aa).

3 disordered regions span residues 1–24, 249–297, and 322–374; these read MLDR…IGRH, PPAE…ALSS, and TRLE…QSSQ. Low complexity predominate over residues 267 to 297; it reads SGGSTMSSGGGNNNNSNSKKKSPASSFALSS. Residues 299–338 enclose the LIM interaction domain (LID) domain; that stretch reads DVMVVGEPTLMGGEFGDEDERLITRLENTQFDAANGIDDE. Over residues 341 to 374 the composition is skewed to polar residues; that stretch reads FNSSPTMGTNSPWNSKAPSSQQGKNDNPSSQSSQ.

Belongs to the LDB family. As to expression, expressed ubiquitously in the embryo and adult.

It localises to the nucleus. Functionally, binds to the LIM domain of a wide variety of LIM domain-containing transcription factors. The sequence is that of LIM domain-binding protein 1-A (ldb1a) from Danio rerio (Zebrafish).